Consider the following 317-residue polypeptide: Annexin D2 (317 aa).

Ala-2 is modified (N-acetylalanine). 4 Annexin repeats span residues 11 to 82 (PLPE…LWTL), 83 to 154 (DPPE…PLVS), 166 to 238 (MLAR…AVIT), and 242 to 313 (YPEK…ALLG). Residues Phe-24, Gly-26, Gly-28, and Glu-68 each contribute to the Ca(2+) site. Phosphoserine is present on Ser-95. Residues Thr-100 and Thr-112 each carry the phosphothreonine modification. At Tyr-129 the chain carries Phosphotyrosine. Residues Ile-255 and Gly-259 each contribute to the Ca(2+) site. Tyr-284 bears the Phosphotyrosine mark. A Phosphoserine modification is found at Ser-289. Positions 299, 300, and 305 each coordinate Ca(2+).

This sequence belongs to the annexin (TC 1.A.31.1) family. In terms of tissue distribution, expressed mainly in roots and flowers. Low in stems and bearly detectable in leaves.

The protein resides in the cytoplasm. It localises to the cytosol. It is found in the membrane. May mediate regulated, targeted secretion of Golgi-derived vesicles during seedling development. This is Annexin D2 (ANN2) from Arabidopsis thaliana (Mouse-ear cress).